A 271-amino-acid chain; its full sequence is Shikimate dehydrogenase (NADP(+)) (271 aa).

Residues 16–18 (SRS) and T63 each bind shikimate. The active-site Proton acceptor is the K67. Shikimate contacts are provided by N88 and D104. NADP(+)-binding positions include 128–132 (GAGGA), 152–157 (NRTASK), and M215. Y217 serves as a coordination point for shikimate. Position 238 (G238) interacts with NADP(+).

Belongs to the shikimate dehydrogenase family. Homodimer.

The enzyme catalyses shikimate + NADP(+) = 3-dehydroshikimate + NADPH + H(+). The protein operates within metabolic intermediate biosynthesis; chorismate biosynthesis; chorismate from D-erythrose 4-phosphate and phosphoenolpyruvate: step 4/7. In terms of biological role, involved in the biosynthesis of the chorismate, which leads to the biosynthesis of aromatic amino acids. Catalyzes the reversible NADPH linked reduction of 3-dehydroshikimate (DHSA) to yield shikimate (SA). This is Shikimate dehydrogenase (NADP(+)) from Chromohalobacter salexigens (strain ATCC BAA-138 / DSM 3043 / CIP 106854 / NCIMB 13768 / 1H11).